Here is a 347-residue protein sequence, read N- to C-terminus: tRNA N6-adenosine threonylcarbamoyltransferase (347 aa).

The Fe cation site is built by His113 and His117. Substrate contacts are provided by residues 136 to 140, Asp170, Gly183, Asp187, and Asn282; that span reads IVSGG. Residue Asp310 coordinates Fe cation.

This sequence belongs to the KAE1 / TsaD family. Requires Fe(2+) as cofactor.

Its subcellular location is the cytoplasm. The enzyme catalyses L-threonylcarbamoyladenylate + adenosine(37) in tRNA = N(6)-L-threonylcarbamoyladenosine(37) in tRNA + AMP + H(+). In terms of biological role, required for the formation of a threonylcarbamoyl group on adenosine at position 37 (t(6)A37) in tRNAs that read codons beginning with adenine. Is involved in the transfer of the threonylcarbamoyl moiety of threonylcarbamoyl-AMP (TC-AMP) to the N6 group of A37, together with TsaE and TsaB. TsaD likely plays a direct catalytic role in this reaction. The protein is tRNA N6-adenosine threonylcarbamoyltransferase of Bifidobacterium adolescentis (strain ATCC 15703 / DSM 20083 / NCTC 11814 / E194a).